We begin with the raw amino-acid sequence, 156 residues long: MPRRREVPKREILPDPKYHNIELAKFVNVLMTRGKKSVAEQIIYGALNHLEKKTGKDPVEVFTQALSNIRPVVEVKSRRVGGANYQVPVEVRSIRRSALAMRWLRDAARKRSEKSMDLRLASELLEASENRGAAIKKREEVHRMAESNKAFSHFRF.

It belongs to the universal ribosomal protein uS7 family. In terms of assembly, part of the 30S ribosomal subunit. Contacts proteins S9 and S11.

Its function is as follows. One of the primary rRNA binding proteins, it binds directly to 16S rRNA where it nucleates assembly of the head domain of the 30S subunit. Is located at the subunit interface close to the decoding center, probably blocks exit of the E-site tRNA. This Nitrosomonas europaea (strain ATCC 19718 / CIP 103999 / KCTC 2705 / NBRC 14298) protein is Small ribosomal subunit protein uS7.